The chain runs to 348 residues: Uroporphyrinogen decarboxylase (348 aa).

Residues 23–27 (RQAGR), aspartate 72, tyrosine 148, serine 203, and histidine 316 each bind substrate.

It belongs to the uroporphyrinogen decarboxylase family. Homodimer.

It is found in the cytoplasm. It catalyses the reaction uroporphyrinogen III + 4 H(+) = coproporphyrinogen III + 4 CO2. It participates in porphyrin-containing compound metabolism; protoporphyrin-IX biosynthesis; coproporphyrinogen-III from 5-aminolevulinate: step 4/4. In terms of biological role, catalyzes the decarboxylation of four acetate groups of uroporphyrinogen-III to yield coproporphyrinogen-III. This is Uroporphyrinogen decarboxylase from Myxococcus xanthus (strain DK1622).